The primary structure comprises 148 residues: Putative nickel-responsive regulator (148 aa).

Residues His-88, His-99, His-101, and Cys-107 each contribute to the Ni(2+) site.

The protein belongs to the transcriptional regulatory CopG/NikR family. Requires Ni(2+) as cofactor.

Its function is as follows. Transcriptional regulator. The protein is Putative nickel-responsive regulator of Helicobacter pylori (strain G27).